The chain runs to 229 residues: 7-cyano-7-deazaguanine synthase (229 aa).

An ATP-binding site is contributed by 8–18; sequence FSGGQDSTTCL. Cys187, Cys196, Cys199, and Cys202 together coordinate Zn(2+).

It belongs to the QueC family. Requires Zn(2+) as cofactor.

The enzyme catalyses 7-carboxy-7-deazaguanine + NH4(+) + ATP = 7-cyano-7-deazaguanine + ADP + phosphate + H2O + H(+). It functions in the pathway purine metabolism; 7-cyano-7-deazaguanine biosynthesis. Its function is as follows. Catalyzes the ATP-dependent conversion of 7-carboxy-7-deazaguanine (CDG) to 7-cyano-7-deazaguanine (preQ(0)). This is 7-cyano-7-deazaguanine synthase from Shewanella halifaxensis (strain HAW-EB4).